The following is a 515-amino-acid chain: Bifunctional purine biosynthesis protein PurH (515 aa).

Residues 1 to 145 enclose the MGS-like domain; it reads MTKRALISVS…KNHASVTVVV (145 aa).

Belongs to the PurH family.

The catalysed reaction is (6R)-10-formyltetrahydrofolate + 5-amino-1-(5-phospho-beta-D-ribosyl)imidazole-4-carboxamide = 5-formamido-1-(5-phospho-D-ribosyl)imidazole-4-carboxamide + (6S)-5,6,7,8-tetrahydrofolate. The enzyme catalyses IMP + H2O = 5-formamido-1-(5-phospho-D-ribosyl)imidazole-4-carboxamide. It participates in purine metabolism; IMP biosynthesis via de novo pathway; 5-formamido-1-(5-phospho-D-ribosyl)imidazole-4-carboxamide from 5-amino-1-(5-phospho-D-ribosyl)imidazole-4-carboxamide (10-formyl THF route): step 1/1. The protein operates within purine metabolism; IMP biosynthesis via de novo pathway; IMP from 5-formamido-1-(5-phospho-D-ribosyl)imidazole-4-carboxamide: step 1/1. This chain is Bifunctional purine biosynthesis protein PurH, found in Streptococcus pyogenes serotype M2 (strain MGAS10270).